Reading from the N-terminus, the 339-residue chain is Anthranilate phosphoribosyltransferase (339 aa).

Residues G79, G82–D83, S87, N89–T92, K107–S115, and S119 each bind 5-phospho-alpha-D-ribose 1-diphosphate. Anthranilate is bound at residue G79. S91 serves as a coordination point for Mg(2+). N110 contributes to the anthranilate binding site. R165 is an anthranilate binding site. The Mg(2+) site is built by D224 and E225.

This sequence belongs to the anthranilate phosphoribosyltransferase family. Homodimer. It depends on Mg(2+) as a cofactor.

The enzyme catalyses N-(5-phospho-beta-D-ribosyl)anthranilate + diphosphate = 5-phospho-alpha-D-ribose 1-diphosphate + anthranilate. The protein operates within amino-acid biosynthesis; L-tryptophan biosynthesis; L-tryptophan from chorismate: step 2/5. Catalyzes the transfer of the phosphoribosyl group of 5-phosphorylribose-1-pyrophosphate (PRPP) to anthranilate to yield N-(5'-phosphoribosyl)-anthranilate (PRA). This is Anthranilate phosphoribosyltransferase from Listeria monocytogenes serotype 4a (strain HCC23).